The chain runs to 154 residues: Myoglobin (154 aa).

The region spanning 2-148 is the Globin domain; it reads GLSEGEWQLV…FRKDIATKYK (147 aa). Phosphoserine is present on S4. Residue H65 participates in nitrite binding. H65 is a binding site for O2. At T68 the chain carries Phosphothreonine. A heme b-binding site is contributed by H94.

This sequence belongs to the globin family. As to quaternary structure, monomeric.

It localises to the cytoplasm. It is found in the sarcoplasm. The catalysed reaction is Fe(III)-heme b-[protein] + nitric oxide + H2O = Fe(II)-heme b-[protein] + nitrite + 2 H(+). The enzyme catalyses H2O2 + AH2 = A + 2 H2O. In terms of biological role, monomeric heme protein which primary function is to store oxygen and facilitate its diffusion within muscle tissues. Reversibly binds oxygen through a pentacoordinated heme iron and enables its timely and efficient release as needed during periods of heightened demand. Depending on the oxidative conditions of tissues and cells, and in addition to its ability to bind oxygen, it also has a nitrite reductase activity whereby it regulates the production of bioactive nitric oxide. Under stress conditions, like hypoxia and anoxia, it also protects cells against reactive oxygen species thanks to its pseudoperoxidase activity. This is Myoglobin (MB) from Phocoenoides dalli dalli (Dall's porpoise).